A 427-amino-acid polypeptide reads, in one-letter code: Serine--tRNA ligase (427 aa).

Residue 231-233 (TAE) participates in L-serine binding. 262-264 (RSE) contacts ATP. An L-serine-binding site is contributed by Glu-285. 349–352 (EISS) is an ATP binding site. Ser-385 provides a ligand contact to L-serine.

Belongs to the class-II aminoacyl-tRNA synthetase family. Type-1 seryl-tRNA synthetase subfamily. In terms of assembly, homodimer. The tRNA molecule binds across the dimer.

Its subcellular location is the cytoplasm. The catalysed reaction is tRNA(Ser) + L-serine + ATP = L-seryl-tRNA(Ser) + AMP + diphosphate + H(+). It catalyses the reaction tRNA(Sec) + L-serine + ATP = L-seryl-tRNA(Sec) + AMP + diphosphate + H(+). Its pathway is aminoacyl-tRNA biosynthesis; selenocysteinyl-tRNA(Sec) biosynthesis; L-seryl-tRNA(Sec) from L-serine and tRNA(Sec): step 1/1. Functionally, catalyzes the attachment of serine to tRNA(Ser). Is also able to aminoacylate tRNA(Sec) with serine, to form the misacylated tRNA L-seryl-tRNA(Sec), which will be further converted into selenocysteinyl-tRNA(Sec). This Sinorhizobium medicae (strain WSM419) (Ensifer medicae) protein is Serine--tRNA ligase.